Reading from the N-terminus, the 73-residue chain is UPF0235 protein PCC7424_0673 (73 aa).

Belongs to the UPF0235 family.

The chain is UPF0235 protein PCC7424_0673 from Gloeothece citriformis (strain PCC 7424) (Cyanothece sp. (strain PCC 7424)).